A 352-amino-acid chain; its full sequence is Ion-translocating oxidoreductase complex subunit D (352 aa).

5 consecutive transmembrane segments (helical) span residues 20 to 40 (IMLL…WFFG), 42 to 62 (GTLV…ALVL), 78 to 109 (ALLT…VIIA), 123 to 143 (PAMI…TSWL), and 148 to 168 (IAVN…GHTA). Position 187 is an FMN phosphoryl threonine (Thr-187). The next 5 membrane-spanning stretches (helical) occupy residues 214–234 (ILAG…GVWL), 242–262 (WHIP…GWLF), 267–287 (LAAP…FFIL), 301–321 (LIFG…GGYP), and 322–342 (DGVA…DYYT).

This sequence belongs to the NqrB/RnfD family. The complex is composed of six subunits: RsxA, RsxB, RsxC, RsxD, RsxE and RsxG. The cofactor is FMN.

It localises to the cell inner membrane. Its function is as follows. Part of a membrane-bound complex that couples electron transfer with translocation of ions across the membrane. Required to maintain the reduced state of SoxR. This Escherichia coli O6:K15:H31 (strain 536 / UPEC) protein is Ion-translocating oxidoreductase complex subunit D.